Here is a 123-residue protein sequence, read N- to C-terminus: Large ribosomal subunit protein bL12 (123 aa).

Belongs to the bacterial ribosomal protein bL12 family. As to quaternary structure, homodimer. Part of the ribosomal stalk of the 50S ribosomal subunit. Forms a multimeric L10(L12)X complex, where L10 forms an elongated spine to which 2 to 4 L12 dimers bind in a sequential fashion. Binds GTP-bound translation factors.

Forms part of the ribosomal stalk which helps the ribosome interact with GTP-bound translation factors. Is thus essential for accurate translation. The sequence is that of Large ribosomal subunit protein bL12 from Bartonella quintana (strain Toulouse) (Rochalimaea quintana).